Here is a 451-residue protein sequence, read N- to C-terminus: Trimethylamine monooxygenase (451 aa).

Residues S12, E37, Q39, L45, W46, and H62 each coordinate FAD. NADP(+) contacts are provided by W70 and N72. Residues N72 and V125 each coordinate FAD. S204, S205, S207, and R228 together coordinate NADP(+). FAD-binding residues include Q317 and T320. Position 411 (R411) interacts with NADP(+).

This sequence belongs to the FMO family. It depends on FAD as a cofactor.

It carries out the reaction trimethylamine + NADPH + O2 = trimethylamine N-oxide + NADP(+) + H2O. Catalyzes the oxidation of trimethylamine (TMA) to produce trimethylamine N-oxide (TMAO). In vitro, has a broad substrate specificity, oxidizing many nitrogen- and sulfur-containing compounds, including dimethylamine (DMA), dimethylsulfide (DMS), dimethylsulfoxide (DMSO), cysteamine, methimazole and dimethylaniline. The sequence is that of Trimethylamine monooxygenase from Methylocella silvestris (strain DSM 15510 / CIP 108128 / LMG 27833 / NCIMB 13906 / BL2).